The chain runs to 514 residues: 2,3-bisphosphoglycerate-independent phosphoglycerate mutase (514 aa).

Mn(2+)-binding residues include Asp14 and Ser64. The active-site Phosphoserine intermediate is Ser64. Residues His125, 155–156, Arg187, Arg193, 263–266, and Lys336 contribute to the substrate site; these read RD and RADR. Mn(2+) contacts are provided by Asp403, His407, Asp444, His445, and His463.

This sequence belongs to the BPG-independent phosphoglycerate mutase family. Monomer. Requires Mn(2+) as cofactor.

It carries out the reaction (2R)-2-phosphoglycerate = (2R)-3-phosphoglycerate. It functions in the pathway carbohydrate degradation; glycolysis; pyruvate from D-glyceraldehyde 3-phosphate: step 3/5. Functionally, catalyzes the interconversion of 2-phosphoglycerate and 3-phosphoglycerate. This Escherichia coli O1:K1 / APEC protein is 2,3-bisphosphoglycerate-independent phosphoglycerate mutase.